A 229-amino-acid polypeptide reads, in one-letter code: MEKKKAFTPLLYLASIIFLPWWISLSFQKSMESWVTNWWNTRQSEPFLNDIEEKSILEKFIELEELLFLEEMIKEYSETHLQNLRIGIHKETIQLIKIHNEGRIHTILHFSTNIICFIILSGYSLLGNKELVILNSWVQEFLYNLSDTIKAFSLLLLTDLCIGFHSPHGWELMIGFVYKDFGFVHNEQIISGLVSTFPVILDTIFKYWIFRYLNRVSPSLVVIYHSMND.

A run of 3 helical transmembrane segments spans residues 7 to 27 (FTPL…SLSF), 107 to 127 (ILHF…SLLG), and 189 to 209 (IISG…KYWI).

Belongs to the CemA family.

The protein localises to the plastid. The protein resides in the chloroplast inner membrane. The catalysed reaction is K(+)(in) + H(+)(out) = K(+)(out) + H(+)(in). Functionally, contributes to K(+)/H(+) antiport activity by supporting proton efflux to control proton extrusion and homeostasis in chloroplasts in a light-dependent manner to modulate photosynthesis. Prevents excessive induction of non-photochemical quenching (NPQ) under continuous-light conditions. Indirectly promotes efficient inorganic carbon uptake into chloroplasts. The protein is Potassium/proton antiporter CemA of Lactuca sativa (Garden lettuce).